The chain runs to 363 residues: Ribosomal RNA large subunit methyltransferase M (363 aa).

Residues serine 190, 223–226 (CPGG), aspartate 242, aspartate 262, and aspartate 279 each bind S-adenosyl-L-methionine. The Proton acceptor role is filled by lysine 308.

This sequence belongs to the class I-like SAM-binding methyltransferase superfamily. RNA methyltransferase RlmE family. RlmM subfamily. Monomer.

It is found in the cytoplasm. The enzyme catalyses cytidine(2498) in 23S rRNA + S-adenosyl-L-methionine = 2'-O-methylcytidine(2498) in 23S rRNA + S-adenosyl-L-homocysteine + H(+). Catalyzes the 2'-O-methylation at nucleotide C2498 in 23S rRNA. The sequence is that of Ribosomal RNA large subunit methyltransferase M from Vibrio vulnificus (strain CMCP6).